Reading from the N-terminus, the 86-residue chain is Large ribosomal subunit protein eL43 (86 aa).

The C4-type zinc finger occupies 38 to 60 (CPFCGHKGKVYRLSTGVWACKKC).

It belongs to the eukaryotic ribosomal protein eL43 family. It depends on Zn(2+) as a cofactor.

This Desulfurococcus amylolyticus (strain DSM 18924 / JCM 16383 / VKM B-2413 / 1221n) (Desulfurococcus kamchatkensis) protein is Large ribosomal subunit protein eL43.